A 168-amino-acid chain; its full sequence is Disulfide bond formation protein B 1 (168 aa).

Residues 1-14 are Cytoplasmic-facing; the sequence is MNEQTSRLNRERRF. A helical membrane pass occupies residues 15-31; it reads LVLLGLICLSLIGGALY. Residues 32-49 lie on the Periplasmic side of the membrane; it reads MQVVLGEAPCPLCILQRY. Residues Cys41 and Cys44 are joined by a disulfide bond. A helical transmembrane segment spans residues 50–65; sequence ALLFIAVFAFIAAAMP. At 66-72 the chain is on the cytoplasmic side; the sequence is GRRSLTF. A helical membrane pass occupies residues 73-89; it reads FEALVVLSAIGGIVAAG. Residues 90–144 lie on the Periplasmic side of the membrane; that stretch reads NHVYILANPMVSCGIDTLQPIVDDLPLAKLWPLAFQVDGFCSTPYPPILGLSLAQ. Cysteines 102 and 130 form a disulfide. A helical membrane pass occupies residues 145 to 163; sequence WALVAFVLTAVLVPLGIYR. Topologically, residues 164 to 168 are cytoplasmic; sequence NRRQA.

This sequence belongs to the DsbB family.

The protein localises to the cell inner membrane. Functionally, required for disulfide bond formation in some periplasmic proteins. Acts by oxidizing the DsbA protein. This chain is Disulfide bond formation protein B 1 (dsbB1), found in Pseudomonas putida (strain ATCC 47054 / DSM 6125 / CFBP 8728 / NCIMB 11950 / KT2440).